The sequence spans 232 residues: Putative N-acetylmannosamine-6-phosphate 2-epimerase (232 aa).

This sequence belongs to the NanE family.

It catalyses the reaction an N-acyl-D-glucosamine 6-phosphate = an N-acyl-D-mannosamine 6-phosphate. It participates in amino-sugar metabolism; N-acetylneuraminate degradation; D-fructose 6-phosphate from N-acetylneuraminate: step 3/5. Converts N-acetylmannosamine-6-phosphate (ManNAc-6-P) to N-acetylglucosamine-6-phosphate (GlcNAc-6-P). This is Putative N-acetylmannosamine-6-phosphate 2-epimerase from Borrelia garinii subsp. bavariensis (strain ATCC BAA-2496 / DSM 23469 / PBi) (Borreliella bavariensis).